The primary structure comprises 129 residues: uncharacterized protein (129 aa).

Residues 8–24 (YLILFITIIAICSLFRI) traverse the membrane as a helical segment.

It is found in the membrane. This is an uncharacterized protein from Rickettsia prowazekii (strain Madrid E).